The chain runs to 418 residues: Nuclear hormone receptor 114 (418 aa).

Residues 12–87 (DHVCLVCQDF…VGMDRNALQQ (76 aa)) constitute a DNA-binding region (nuclear receptor). 2 consecutive NR C4-type zinc fingers follow at residues 15 to 35 (CLVCQDFASGYHYGVPSCVGC) and 51 to 70 (CQFEGNCPVDKTIRCACRYC). The tract at residues 89 to 130 (RDPIGYTKRTRRPKKELKTTSDCSSDEGASTPPSVSPLQLSP) is disordered. Residues 170–409 (PIRSLHEALC…AFARQLFFGD (240 aa)) form the NR LBD domain. Residues 398–409 (FSAFARQLFFGD) are AF-2.

This sequence belongs to the nuclear hormone receptor family. Expressed in germ and intestinal cells and at low levels in the hypodermis.

The protein resides in the nucleus. Its function is as follows. Probable transcription factor which may have a role in detoxifying dietary metabolites arising from bacterial tryptophan metabolism. Required for fertility and involved in proper postembryonic germline development, especially germline stem cell (GSC) proliferation. Required for activation of the methionine/S-adenosylmethionine (Met/SAM) cycle in response to low levels of SAM. This is Nuclear hormone receptor 114 from Caenorhabditis elegans.